Reading from the N-terminus, the 424-residue chain is Calreticulin (424 aa).

Positions 1-29 (MAIRARSSSYAAAAVALALALASVAAVAG) are cleaved as a signal peptide. The N-linked (GlcNAc...) asparagine glycan is linked to Asn61. A disulfide bond links Cys115 and Cys147. The an alpha-D-glucoside site is built by Tyr119, Lys121, Tyr138, and Asp145. A run of 7 repeats spans residues 201 to 212 (KQSGSIYEHWDI), 220 to 231 (DPEAKKPEDWDD), 237 to 248 (DPEDKKPEGYDD), 255 to 266 (DPDAKKPEDWDD), 270 to 280 (GEWTAPTIPNP), 284 to 294 (GPWKQKKIKNP), and 298 to 308 (GKWKAPMIDNP). The tract at residues 201-266 (KQSGSIYEHW…DAKKPEDWDD (66 aa)) is 4 X approximate repeats. Residues 217-262 (QIKDPEAKKPEDWDDKEYIPDPEDKKPEGYDDIPKEIPDPDAKKPE) are compositionally biased toward basic and acidic residues. Residues 217–289 (QIKDPEAKKP…PEYKGPWKQK (73 aa)) form a disordered region. The tract at residues 270–308 (GEWTAPTIPNPEYKGPWKQKKIKNPNYQGKWKAPMIDNP) is 3 X approximate repeats. An an alpha-D-glucoside-binding site is contributed by Glu328. A compositionally biased stretch (basic and acidic residues) spans 356–385 (ETWGKHKDAEKAAFDEAEKKKEEEEAAKAG). The tract at residues 356–424 (ETWGKHKDAE…DSDDEKHDEL (69 aa)) is disordered. Acidic residues predominate over residues 386-401 (EDDDDLDDEDAEDEDK). Residues 402-424 (ADEKADSDAEDGKDSDDEKHDEL) are compositionally biased toward basic and acidic residues. Positions 421–424 (HDEL) match the Prevents secretion from ER motif.

This sequence belongs to the calreticulin family. In terms of processing, phosphorylated.

The protein resides in the endoplasmic reticulum lumen. Molecular calcium-binding chaperone promoting folding, oligomeric assembly and quality control in the ER via the calreticulin/calnexin cycle. This lectin may interact transiently with almost all of the monoglucosylated glycoproteins that are synthesized in the ER. This Oryza sativa subsp. japonica (Rice) protein is Calreticulin.